The sequence spans 212 residues: MLTPYGYPTILKTACIAILLSGAAHLFAKPLLPEALIFSVFLLLFTLYFFRDPIRTPPDKKRTVLAPADGKVLLVKPVNNHFTGPSSTLVSIFMSPFNVHVNRIPVDGTVTLLSYHQGTFMMAFDHRSLESNEKMEIGIENKELKLHFSQVSGFLARRIICSLQQGEQVERGKRFGMIRFGSRVDVIVPAHVEVTVKAGQHTKAGETVIARF.

Ser182 serves as the catalytic Schiff-base intermediate with substrate; via pyruvic acid. Residue Ser182 is modified to Pyruvic acid (Ser); by autocatalysis.

Belongs to the phosphatidylserine decarboxylase family. PSD-A subfamily. As to quaternary structure, heterodimer of a large membrane-associated beta subunit and a small pyruvoyl-containing alpha subunit. Pyruvate serves as cofactor. In terms of processing, is synthesized initially as an inactive proenzyme. Formation of the active enzyme involves a self-maturation process in which the active site pyruvoyl group is generated from an internal serine residue via an autocatalytic post-translational modification. Two non-identical subunits are generated from the proenzyme in this reaction, and the pyruvate is formed at the N-terminus of the alpha chain, which is derived from the carboxyl end of the proenzyme. The post-translation cleavage follows an unusual pathway, termed non-hydrolytic serinolysis, in which the side chain hydroxyl group of the serine supplies its oxygen atom to form the C-terminus of the beta chain, while the remainder of the serine residue undergoes an oxidative deamination to produce ammonia and the pyruvoyl prosthetic group on the alpha chain.

Its subcellular location is the cell membrane. It carries out the reaction a 1,2-diacyl-sn-glycero-3-phospho-L-serine + H(+) = a 1,2-diacyl-sn-glycero-3-phosphoethanolamine + CO2. Its pathway is phospholipid metabolism; phosphatidylethanolamine biosynthesis; phosphatidylethanolamine from CDP-diacylglycerol: step 2/2. Its function is as follows. Catalyzes the formation of phosphatidylethanolamine (PtdEtn) from phosphatidylserine (PtdSer). This is Phosphatidylserine decarboxylase proenzyme from Chlorobium limicola (strain DSM 245 / NBRC 103803 / 6330).